The chain runs to 636 residues: Nuclear receptor subfamily 2 group C member 1 (636 aa).

The segment at residues 149-224 is a DNA-binding region (nuclear receptor); it reads VELCVVCGDK…LGMKQDSVQC (76 aa). 2 consecutive NR C4-type zinc fingers follow at residues 152–172 and 188–207; these read CVVC…CEGC and CRGS…CQYC. Positions 382-623 constitute an NR LBD domain; the sequence is ECVGSNSNLT…SIIPYILRME (242 aa).

This sequence belongs to the nuclear hormone receptor family. NR2 subfamily.

The protein resides in the nucleus. Functionally, orphan nuclear receptor. Binds the IR7 element in the promoter of its own gene in an autoregulatory negative feedback mechanism. Primarily repressor of a broad range of genes. Binds to hormone response elements (HREs) consisting of two 5'-AGGTCA-3' half site direct repeat consensus sequences. The protein is Nuclear receptor subfamily 2 group C member 1 of Xenopus tropicalis (Western clawed frog).